A 141-amino-acid chain; its full sequence is Nucleoside diphosphate kinase (141 aa).

ATP is bound by residues Lys-11, Phe-59, Arg-87, Thr-93, Arg-104, and Asn-114. The active-site Pros-phosphohistidine intermediate is His-117.

This sequence belongs to the NDK family. Homotetramer. Mg(2+) serves as cofactor.

Its subcellular location is the cytoplasm. It catalyses the reaction a 2'-deoxyribonucleoside 5'-diphosphate + ATP = a 2'-deoxyribonucleoside 5'-triphosphate + ADP. The catalysed reaction is a ribonucleoside 5'-diphosphate + ATP = a ribonucleoside 5'-triphosphate + ADP. Major role in the synthesis of nucleoside triphosphates other than ATP. The ATP gamma phosphate is transferred to the NDP beta phosphate via a ping-pong mechanism, using a phosphorylated active-site intermediate. This Cupriavidus taiwanensis (strain DSM 17343 / BCRC 17206 / CCUG 44338 / CIP 107171 / LMG 19424 / R1) (Ralstonia taiwanensis (strain LMG 19424)) protein is Nucleoside diphosphate kinase.